The primary structure comprises 217 residues: Elongation factor Ts (217 aa).

An involved in Mg(2+) ion dislocation from EF-Tu region spans residues 82 to 85 (TDFV).

The protein belongs to the EF-Ts family.

The protein localises to the cytoplasm. Associates with the EF-Tu.GDP complex and induces the exchange of GDP to GTP. It remains bound to the aminoacyl-tRNA.EF-Tu.GTP complex up to the GTP hydrolysis stage on the ribosome. The chain is Elongation factor Ts from Prochlorococcus marinus (strain SARG / CCMP1375 / SS120).